A 199-amino-acid chain; its full sequence is UPF0637 protein YsbB (199 aa).

It belongs to the UPF0637 family.

This Lactococcus lactis subsp. lactis (strain IL1403) (Streptococcus lactis) protein is UPF0637 protein YsbB (ysbB).